Consider the following 299-residue polypeptide: Oxygen-dependent coproporphyrinogen-III oxidase (299 aa).

Ser-92 serves as a coordination point for substrate. 2 residues coordinate Mn(2+): His-96 and His-106. Residue His-106 is the Proton donor of the active site. Position 108 to 110 (108 to 110 (NVR)) interacts with substrate. Positions 145 and 175 each coordinate Mn(2+). Residues 240-275 (YVEFNLVWDRGTLFGLQTGGRTESILMSMPPLVRWE) are important for dimerization. Substrate is bound at residue 258 to 260 (GGR).

It belongs to the aerobic coproporphyrinogen-III oxidase family. As to quaternary structure, homodimer. Mn(2+) is required as a cofactor.

Its subcellular location is the cytoplasm. The enzyme catalyses coproporphyrinogen III + O2 + 2 H(+) = protoporphyrinogen IX + 2 CO2 + 2 H2O. The protein operates within porphyrin-containing compound metabolism; protoporphyrin-IX biosynthesis; protoporphyrinogen-IX from coproporphyrinogen-III (O2 route): step 1/1. Functionally, involved in the heme biosynthesis. Catalyzes the aerobic oxidative decarboxylation of propionate groups of rings A and B of coproporphyrinogen-III to yield the vinyl groups in protoporphyrinogen-IX. The polypeptide is Oxygen-dependent coproporphyrinogen-III oxidase (Escherichia coli (strain SMS-3-5 / SECEC)).